The chain runs to 213 residues: ATP-dependent dethiobiotin synthetase BioD (213 aa).

G13 to V18 lines the ATP pocket. T17 provides a ligand contact to Mg(2+). K33 is a catalytic residue. E100 is a binding site for Mg(2+). ATP-binding positions include E100–G103 and P184–L186.

The protein belongs to the dethiobiotin synthetase family. Homodimer. Mg(2+) serves as cofactor.

The protein localises to the cytoplasm. The catalysed reaction is (7R,8S)-7,8-diammoniononanoate + CO2 + ATP = (4R,5S)-dethiobiotin + ADP + phosphate + 3 H(+). The protein operates within cofactor biosynthesis; biotin biosynthesis; biotin from 7,8-diaminononanoate: step 1/2. In terms of biological role, catalyzes a mechanistically unusual reaction, the ATP-dependent insertion of CO2 between the N7 and N8 nitrogen atoms of 7,8-diaminopelargonic acid (DAPA, also called 7,8-diammoniononanoate) to form a ureido ring. This chain is ATP-dependent dethiobiotin synthetase BioD, found in Rhodopseudomonas palustris (strain BisA53).